The following is a 279-amino-acid chain: Urease accessory protein UreD (279 aa).

It belongs to the UreD family. As to quaternary structure, ureD, UreF and UreG form a complex that acts as a GTP-hydrolysis-dependent molecular chaperone, activating the urease apoprotein by helping to assemble the nickel containing metallocenter of UreC. The UreE protein probably delivers the nickel.

It is found in the cytoplasm. In terms of biological role, required for maturation of urease via the functional incorporation of the urease nickel metallocenter. This is Urease accessory protein UreD from Rhodopseudomonas palustris (strain ATCC BAA-98 / CGA009).